The primary structure comprises 606 residues: Phosphogluconate dehydratase (606 aa).

Positions 156 and 223 each coordinate [4Fe-4S] cluster.

This sequence belongs to the IlvD/Edd family. [4Fe-4S] cluster is required as a cofactor.

The catalysed reaction is 6-phospho-D-gluconate = 2-dehydro-3-deoxy-6-phospho-D-gluconate + H2O. It participates in carbohydrate metabolism; Entner-Doudoroff pathway. Its function is as follows. Catalyzes the dehydration of 6-phospho-D-gluconate to 2-dehydro-3-deoxy-6-phospho-D-gluconate. This is Phosphogluconate dehydratase from Rhizobium meliloti (strain 1021) (Ensifer meliloti).